The sequence spans 245 residues: Protein DEHYDRATION-INDUCED 19 homolog 4 (245 aa).

This sequence belongs to the Di19 family.

This is Protein DEHYDRATION-INDUCED 19 homolog 4 (DI19-4) from Oryza sativa subsp. japonica (Rice).